The primary structure comprises 1119 residues: Period circadian protein homolog 3 (1119 aa).

Residues 1–48 (MDPCGNPAVPGGDCPQTRGPGLQGSSGQEGPLQGICVDSSHSEHEDRN) form a disordered region. Positions 54–63 (LIMVVQEMKK) match the Nuclear export signal 1 motif. PAS domains lie at 120–187 (LASE…PTQL) and 259–325 (YEAP…KVLK). One can recognise a PAC domain in the interval 334 to 377 (HSPIRFCTQNGDYVILDSSWSSFVNPWSRKVSFIIGRHKVRTSP). Residues 400–409 (LQEQIHRLLL) carry the Nuclear export signal 3 motif. Residues 419–428 (GYGSLGSSGS) are compositionally biased toward low complexity. Disordered stretches follow at residues 419 to 449 (GYGS…VEEA), 483 to 530 (VKPV…SSSY), 718 to 744 (HSRC…SSSS), and 878 to 910 (LEPT…SRSS). Composition is skewed to polar residues over residues 429–442 (QEQH…SESS) and 491–515 (TEPQ…STDT). A CSNK1E binding domain region spans residues 551–750 (LKRKCISCTN…SSSSAHLCPH (200 aa)). The Nuclear localization signal motif lies at 720 to 739 (RCAGSERRKHKRKKLPTPVD). The segment covering 885–903 (HGPRRVEENWETHSEEEHP) has biased composition (basic and acidic residues). Serine 907 carries the post-translational modification Phosphoserine. Residues 913-920 (LQLNLLQE) carry the Nuclear export signal 2 motif. Residues 947–1011 (GNSGSRSPPC…QDTHRDRAFS (65 aa)) form a disordered region. Over residues 970–988 (SPSAAASGSSASSVHGSGS) the composition is skewed to low complexity. The segment covering 989-1001 (DYTSEVSENGQRS) has biased composition (polar residues). A CRY binding domain region spans residues 1037–1119 (ERGRDTVLRE…VQQKTPVEQL (83 aa)).

Homodimer. Component of the circadian core oscillator, which includes the CRY proteins, CLOCK or NPAS2, BMAL1 or BMAL2, CSNK1D and/or CSNK1E, TIMELESS and the PER proteins. Interacts directly with PER1, PER2, CRY1, CRY2, and TIMELESS; interaction with CRY1 and CRY2 is weak and not rhythmic. Interacts with FBXW11 and BTRC. In terms of processing, phosphorylation by CSNK1E is weak and appears to require association with PER1 and translocation to the nucleus. Post-translationally, ubiquitinated.

The protein localises to the cytoplasm. The protein resides in the nucleus. In terms of biological role, originally described as a core component of the circadian clock. The circadian clock, an internal time-keeping system, regulates various physiological processes through the generation of approximately 24 hour circadian rhythms in gene expression, which are translated into rhythms in metabolism and behavior. It is derived from the Latin roots 'circa' (about) and 'diem' (day) and acts as an important regulator of a wide array of physiological functions including metabolism, sleep, body temperature, blood pressure, endocrine, immune, cardiovascular, and renal function. Consists of two major components: the central clock, residing in the suprachiasmatic nucleus (SCN) of the brain, and the peripheral clocks that are present in nearly every tissue and organ system. Both the central and peripheral clocks can be reset by environmental cues, also known as Zeitgebers (German for 'timegivers'). The predominant Zeitgeber for the central clock is light, which is sensed by retina and signals directly to the SCN. The central clock entrains the peripheral clocks through neuronal and hormonal signals, body temperature and feeding-related cues, aligning all clocks with the external light/dark cycle. Circadian rhythms allow an organism to achieve temporal homeostasis with its environment at the molecular level by regulating gene expression to create a peak of protein expression once every 24 hours to control when a particular physiological process is most active with respect to the solar day. Transcription and translation of core clock components (CLOCK, NPAS2, BMAL1, BMAL2, PER1, PER2, PER3, CRY1 and CRY2) plays a critical role in rhythm generation, whereas delays imposed by post-translational modifications (PTMs) are important for determining the period (tau) of the rhythms (tau refers to the period of a rhythm and is the length, in time, of one complete cycle). A diurnal rhythm is synchronized with the day/night cycle, while the ultradian and infradian rhythms have a period shorter and longer than 24 hours, respectively. Disruptions in the circadian rhythms contribute to the pathology of cardiovascular diseases, cancer, metabolic syndromes and aging. A transcription/translation feedback loop (TTFL) forms the core of the molecular circadian clock mechanism. Transcription factors, CLOCK or NPAS2 and BMAL1 or BMAL2, form the positive limb of the feedback loop, act in the form of a heterodimer and activate the transcription of core clock genes and clock-controlled genes (involved in key metabolic processes), harboring E-box elements (5'-CACGTG-3') within their promoters. The core clock genes: PER1/2/3 and CRY1/2 which are transcriptional repressors form the negative limb of the feedback loop and interact with the CLOCK|NPAS2-BMAL1|BMAL2 heterodimer inhibiting its activity and thereby negatively regulating their own expression. This heterodimer also activates nuclear receptors NR1D1, NR1D2, RORA, RORB and RORG, which form a second feedback loop and which activate and repress BMAL1 transcription, respectively. Has a redundant role with the other PER proteins PER1 and PER2 and is not essential for the circadian rhythms maintenance. In contrast, plays an important role in sleep-wake timing and sleep homeostasis probably through the transcriptional regulation of sleep homeostasis-related genes, without influencing circadian parameters. Can bind heme. This is Period circadian protein homolog 3 (Per3) from Rattus norvegicus (Rat).